Consider the following 247-residue polypeptide: Uridylate kinase (247 aa).

ATP is bound at residue lysine 18–glycine 21. Position 60 (glycine 60) interacts with UMP. ATP is bound by residues glycine 61 and arginine 65. UMP contacts are provided by residues aspartate 80 and threonine 141–threonine 148. The ATP site is built by threonine 168, tyrosine 174, and aspartate 177.

This sequence belongs to the UMP kinase family. In terms of assembly, homohexamer.

Its subcellular location is the cytoplasm. The catalysed reaction is UMP + ATP = UDP + ADP. It participates in pyrimidine metabolism; CTP biosynthesis via de novo pathway; UDP from UMP (UMPK route): step 1/1. Its activity is regulated as follows. Inhibited by UTP. Functionally, catalyzes the reversible phosphorylation of UMP to UDP. In Pseudomonas fluorescens (strain ATCC BAA-477 / NRRL B-23932 / Pf-5), this protein is Uridylate kinase.